The following is a 667-amino-acid chain: MLRTCDITHIKNNYEAIIWKGERDCSTISTKYPNSAIFYKKRFIMLTPELGFAHSYNQQVKPLYTFCEKQRHLKNRKPLTILPSLSHKLQEMKFLPASDKSFESQYTEFLESFKILYREPLFLQIDGFIKDFRKWIKGEFNDFGDTRKIQLEPFQKNILIHVIFFIAVTKLPALANRVINYLTHVFDIEFVNESTLNTLKQKTNVFLVPRRHGKTWFIVPIISFLLKNIEGISIGYVAHQKHVSHFVMKEVEFKCRRMFPEKTITCLDNVITIDHQNIKSTALFASCYNTHQSIRGQSFNLLIVDESHFIKKDAFSTILGFLPQASTKILFISSTNSGNHSTSFLMKLNNSPFEMLSVVSYVCEDHAHMLNERGNATACSCYRLHKPKFISINAEVKKTANLFLEGAFIHEIMGGATCNVINDVLITEQGQTEFEFFRYSTINKNLIPFLGKDLYVYLDPAYTGNRRASGTGIAAIGTYLDQYIVYGMEHYFLESLMTSSDTAIAECAAHMILSILDLHPFFTEVKIIIEGNSNQASAVKIACIIKENITANKSIQVTFFHTPDQNQIAQPFYLLGKEKKLAVEFFISNFNSGNIKASQELISFTIKITYDPVEYALEQIRNIHQISVNNYITYSAKKQACSDDLIIAIIMAIYVCSGNSSASFREI.

A Walker A motif motif is present at residues 208–215 (VPRRHGKT). The short motif at 301–306 (LLIVDE) is the Walker B motif element. Residue Glu306 is the For ATPase activity of the active site. Catalysis depends on for nuclease activity residues Asp459, Glu530, and Asp644.

This sequence belongs to the herpesviridae TRM3 protein family. In terms of assembly, interacts with the terminase subunits TRM1 and TRM2. Interacts with portal protein.

Its subcellular location is the host nucleus. Functionally, component of the molecular motor that translocates viral genomic DNA in empty capsid during DNA packaging. Forms a tripartite terminase complex together with TRM1 and TRM2 in the host cytoplasm. Once the complex reaches the host nucleus, it interacts with the capsid portal vertex. This portal forms a ring in which genomic DNA is translocated into the capsid. TRM3 carries an RNase H-like nuclease activity that plays an important role for the cleavage of concatemeric viral DNA into unit length genomes. The polypeptide is Tripartite terminase subunit 3 (Human herpesvirus 6A (strain Uganda-1102) (HHV-6 variant A)).